We begin with the raw amino-acid sequence, 164 residues long: 3-hydroxyacyl-[acyl-carrier-protein] dehydratase FabZ (164 aa).

His-61 is an active-site residue.

The protein belongs to the thioester dehydratase family. FabZ subfamily.

The protein localises to the cytoplasm. The enzyme catalyses a (3R)-hydroxyacyl-[ACP] = a (2E)-enoyl-[ACP] + H2O. Functionally, involved in unsaturated fatty acids biosynthesis. Catalyzes the dehydration of short chain beta-hydroxyacyl-ACPs and long chain saturated and unsaturated beta-hydroxyacyl-ACPs. This Ralstonia nicotianae (strain ATCC BAA-1114 / GMI1000) (Ralstonia solanacearum) protein is 3-hydroxyacyl-[acyl-carrier-protein] dehydratase FabZ.